A 287-amino-acid chain; its full sequence is 4-hydroxybenzoate octaprenyltransferase (287 aa).

Transmembrane regions (helical) follow at residues 7 to 27 (FISY…LLLW), 30 to 50 (LWAL…LIFV), 94 to 114 (VAVA…LNAF), 118 to 138 (LSVL…FFAM), 142 to 162 (VLGI…LDFI), 167 to 187 (WFLF…YAMV), 209 to 229 (VVVI…VAQL), 235 to 255 (YFLV…KLVS), and 266 to 286 (FRHN…GLGV).

It belongs to the UbiA prenyltransferase family. The cofactor is Mg(2+).

The protein resides in the cell inner membrane. It carries out the reaction all-trans-octaprenyl diphosphate + 4-hydroxybenzoate = 4-hydroxy-3-(all-trans-octaprenyl)benzoate + diphosphate. It participates in cofactor biosynthesis; ubiquinone biosynthesis. Catalyzes the prenylation of para-hydroxybenzoate (PHB) with an all-trans polyprenyl group. Mediates the second step in the final reaction sequence of ubiquinone-8 (UQ-8) biosynthesis, which is the condensation of the polyisoprenoid side chain with PHB, generating the first membrane-bound Q intermediate 3-octaprenyl-4-hydroxybenzoate. The sequence is that of 4-hydroxybenzoate octaprenyltransferase from Polynucleobacter necessarius subsp. necessarius (strain STIR1).